The following is a 103-amino-acid chain: NADH-quinone oxidoreductase subunit K (103 aa).

Helical transmembrane passes span 4 to 24, 28 to 48, and 64 to 84; these read LTSYAFVSMMLFSIGAIGVIA, IFVIYMSIEMMLNGINLFLIT, and MVISIAAAEAAIFLSVIILLF.

The protein belongs to the complex I subunit 4L family. In terms of assembly, NDH-1 is composed of 14 different subunits. Subunits NuoA, H, J, K, L, M, N constitute the membrane sector of the complex.

Its subcellular location is the cell inner membrane. The enzyme catalyses a quinone + NADH + 5 H(+)(in) = a quinol + NAD(+) + 4 H(+)(out). Its function is as follows. NDH-1 shuttles electrons from NADH, via FMN and iron-sulfur (Fe-S) centers, to quinones in the respiratory chain. The immediate electron acceptor for the enzyme in this species is believed to be ubiquinone. Couples the redox reaction to proton translocation (for every two electrons transferred, four hydrogen ions are translocated across the cytoplasmic membrane), and thus conserves the redox energy in a proton gradient. The polypeptide is NADH-quinone oxidoreductase subunit K (Aliarcobacter butzleri (strain RM4018) (Arcobacter butzleri)).